The sequence spans 299 residues: NAD kinase (299 aa).

The active-site Proton acceptor is Asp71. NAD(+) is bound by residues 71–72, 145–146, Arg173, Asp175, 186–191, Ala210, and Gln248; these read DG, ND, and TAYALS.

The protein belongs to the NAD kinase family. A divalent metal cation is required as a cofactor.

The protein localises to the cytoplasm. The enzyme catalyses NAD(+) + ATP = ADP + NADP(+) + H(+). Its function is as follows. Involved in the regulation of the intracellular balance of NAD and NADP, and is a key enzyme in the biosynthesis of NADP. Catalyzes specifically the phosphorylation on 2'-hydroxyl of the adenosine moiety of NAD to yield NADP. The chain is NAD kinase from Bordetella avium (strain 197N).